The following is a 213-amino-acid chain: Kynurenine formamidase (213 aa).

Tryptophan 20 contacts substrate. Residues histidine 50, histidine 54, and aspartate 56 each contribute to the Zn(2+) site. Catalysis depends on histidine 60, which acts as the Proton donor/acceptor. Zn(2+) contacts are provided by histidine 161 and glutamate 173.

The protein belongs to the Cyclase 1 superfamily. KynB family. In terms of assembly, homodimer. It depends on Zn(2+) as a cofactor.

It catalyses the reaction N-formyl-L-kynurenine + H2O = L-kynurenine + formate + H(+). It functions in the pathway amino-acid degradation; L-tryptophan degradation via kynurenine pathway; L-kynurenine from L-tryptophan: step 2/2. In terms of biological role, catalyzes the hydrolysis of N-formyl-L-kynurenine to L-kynurenine, the second step in the kynurenine pathway of tryptophan degradation. In Pseudomonas paraeruginosa (strain DSM 24068 / PA7) (Pseudomonas aeruginosa (strain PA7)), this protein is Kynurenine formamidase.